Consider the following 231-residue polypeptide: Cytochrome c oxidase assembly factor 7 (231 aa).

A2 bears the N-acetylalanine mark. Sel1-like repeat units follow at residues 34–66 (PDGC…EENQ), 68–104 (SDSC…EKPG), 108–146 (IAAC…DGGY), 147–183 (TSSC…DLGH), and 184–219 (IWAC…QLHK).

This sequence belongs to the hcp beta-lactamase family. In terms of assembly, interacts with CHCHD4/MIA40 through transient intermolecular disulfide bonds.

Its subcellular location is the mitochondrion intermembrane space. In terms of biological role, required for assembly of mitochondrial respiratory chain complex I and complex IV. This is Cytochrome c oxidase assembly factor 7 (COA7) from Homo sapiens (Human).